Consider the following 352-residue polypeptide: Ribosomal RNA large subunit methyltransferase M (352 aa).

S-adenosyl-L-methionine-binding positions include S187, 218 to 221 (APGG), D237, D257, and D273. Residue K302 is the Proton acceptor of the active site.

It belongs to the class I-like SAM-binding methyltransferase superfamily. RNA methyltransferase RlmE family. RlmM subfamily. In terms of assembly, monomer.

The protein resides in the cytoplasm. The enzyme catalyses cytidine(2498) in 23S rRNA + S-adenosyl-L-methionine = 2'-O-methylcytidine(2498) in 23S rRNA + S-adenosyl-L-homocysteine + H(+). Functionally, catalyzes the 2'-O-methylation at nucleotide C2498 in 23S rRNA. The protein is Ribosomal RNA large subunit methyltransferase M of Methylococcus capsulatus (strain ATCC 33009 / NCIMB 11132 / Bath).